Reading from the N-terminus, the 89-residue chain is MTITDVRVRKVNLEGKMKAIVSVTFDNAFVVHDVKVVEGQKGLFVAMPSRRTPEGEYRDIAHPISAKAREQISVAVLNAYQEALASAIA.

This sequence belongs to the SpoVG family.

Functionally, could be involved in septation. The chain is Putative septation protein SpoVG from Heliobacterium modesticaldum (strain ATCC 51547 / Ice1).